A 1966-amino-acid chain; its full sequence is Alpha-protein kinase 2 (1966 aa).

Disordered regions lie at residues 23–65 (NSSP…STGL), 211–231 (AMNS…DTDK), 1211–1259 (LKSN…AYSD), 1303–1365 (SLPN…EGAG), 1386–1423 (KTQG…VNGK), and 1437–1463 (NKPV…SVRP). Residues 211–227 (AMNSEQSPDQPFSIASN) are compositionally biased toward polar residues. Residues 1211-1221 (LKSNKKSSSSD) show a composition bias toward low complexity. A compositionally biased stretch (basic and acidic residues) spans 1325–1342 (SDGKMRSKHKEKPDDKQQ). The span at 1388–1397 (QGKKKKKHVQ) shows a compositional bias: basic residues. Basic and acidic residues predominate over residues 1401–1417 (PKPENDAPTDVRSESRQ). The Ig-like domain maps to 1577 to 1659 (PRVVSEIQAD…SLIVANISVS (83 aa)). A disulfide bridge connects residues Cys1599 and Cys1649. One can recognise an Alpha-type protein kinase domain in the interval 1702 to 1934 (KEDFLSDQYF…YCELLGLVSL (233 aa)). Residues 1937 to 1966 (KPKRTVAPPKPKTQPVPKKKTFGPVLNAKS) form a disordered region.

The protein belongs to the protein kinase superfamily. Alpha-type protein kinase family. ALPK subfamily. As to expression, expressed in developing cardiac tissue.

Its subcellular location is the basolateral cell membrane. The enzyme catalyses L-seryl-[protein] + ATP = O-phospho-L-seryl-[protein] + ADP + H(+). It catalyses the reaction L-threonyl-[protein] + ATP = O-phospho-L-threonyl-[protein] + ADP + H(+). Functionally, protein kinase that recognizes phosphorylation sites in which the surrounding peptides have an alpha-helical conformation. Regulates cardiac development and cardiomyocyte differentiation by negatively regulating Wnt/beta-catenin signaling. The polypeptide is Alpha-protein kinase 2 (alpk2) (Danio rerio (Zebrafish)).